Reading from the N-terminus, the 103-residue chain is Co-chaperonin GroES (103 aa).

It belongs to the GroES chaperonin family. Heptamer of 7 subunits arranged in a ring. Interacts with the chaperonin GroEL.

It localises to the cytoplasm. Its function is as follows. Together with the chaperonin GroEL, plays an essential role in assisting protein folding. The GroEL-GroES system forms a nano-cage that allows encapsulation of the non-native substrate proteins and provides a physical environment optimized to promote and accelerate protein folding. GroES binds to the apical surface of the GroEL ring, thereby capping the opening of the GroEL channel. This Synechococcus elongatus (strain ATCC 33912 / PCC 7942 / FACHB-805) (Anacystis nidulans R2) protein is Co-chaperonin GroES.